A 629-amino-acid chain; its full sequence is tRNA uridine 5-carboxymethylaminomethyl modification enzyme MnmG (629 aa).

FAD contacts are provided by residues 15-20, Val-127, and Ser-182; that span reads GAGHAG. The segment at 203–227 is disordered; that stretch reads TPPRVKSSTIDYSKTEEQPGDDHPR. Positions 215–227 are enriched in basic and acidic residues; that stretch reads SKTEEQPGDDHPR. 274–288 is a binding site for NAD(+); it reads GARYCPSIEDKIVRF. Gln-371 is an FAD binding site.

The protein belongs to the MnmG family. As to quaternary structure, homodimer. Heterotetramer of two MnmE and two MnmG subunits. FAD is required as a cofactor.

Its subcellular location is the cytoplasm. Its function is as follows. NAD-binding protein involved in the addition of a carboxymethylaminomethyl (cmnm) group at the wobble position (U34) of certain tRNAs, forming tRNA-cmnm(5)s(2)U34. The polypeptide is tRNA uridine 5-carboxymethylaminomethyl modification enzyme MnmG (Listeria welshimeri serovar 6b (strain ATCC 35897 / DSM 20650 / CCUG 15529 / CIP 8149 / NCTC 11857 / SLCC 5334 / V8)).